Here is a 1087-residue protein sequence, read N- to C-terminus: Kinesin-like protein KIN-14F (1087 aa).

A Calponin-homology (CH) domain is found at 1 to 110 (MDQGAMETLP…CILCLKGFYE (110 aa)). Residues 136-155 (SSPPQYGIGSESTTDESVSL) form a disordered region. The Kinesin motor domain occupies 377–705 (TIRVYCRVRP…LKFAQRVASI (329 aa)). Residue 461-468 (GQTGSGKT) coordinates ATP. Residues 710–749 (ARSNKETGEIRDLKDEISSLKSAMEKKEAELEQLRSGSIR) are a coiled coil. 3 disordered regions span residues 740 to 858 (LEQL…PVSR), 923 to 949 (QGGV…FQKL), and 1004 to 1087 (DSTL…FMVP). 3 stretches are compositionally biased toward polar residues: residues 744–754 (RSGSIRNTTEC), 780–797 (PQPN…CSTG), and 836–856 (TDRA…NLPV). The span at 1017 to 1033 (EPPSKSKNAQRNSSKNS) shows a compositional bias: polar residues. Over residues 1042–1054 (YAHEDTSLVDDKP) the composition is skewed to basic and acidic residues. Residues 1076–1087 (SRSTHHARFMVP) show a composition bias toward basic residues.

The protein belongs to the TRAFAC class myosin-kinesin ATPase superfamily. Kinesin family. KIN-14 subfamily. In terms of assembly, interacts (via C-terminus) with VDAC3. In terms of tissue distribution, expressed in roots, leaves, stems and flowers (at protein level).

The protein resides in the cytoplasm. It is found in the cytoskeleton. Its subcellular location is the mitochondrion. Its function is as follows. Required for keeping the ATP levels stable and balancing the aerobic respiration pathways during seed germination at low temperature. This chain is Kinesin-like protein KIN-14F, found in Arabidopsis thaliana (Mouse-ear cress).